Reading from the N-terminus, the 389-residue chain is RHOMBOID-like protein 1 (389 aa).

7 consecutive transmembrane segments (helical) span residues 56 to 76 (PWLVPAIVVANIALFAISMFI), 136 to 156 (IWLHAGVFHVLANMLSLIFIG), 163 to 183 (FGFVRIGLLYMISGFGGSLLS), 191 to 211 (ISVGASGALFGLLGAMLSELL), 221 to 241 (FAALLTLIFIIAINLAVGILP), 244 to 264 (DNFAHLGGFTSGFLLGFVFLI), and 295 to 315 (VLWITSLVLLIAGYTAGLVVL). Ser196 serves as the catalytic Nucleophile. The Charge relay system role is filled by His248.

This sequence belongs to the peptidase S54 family. Expressed in roots, seedlings, leaves, stems and flowers.

It is found in the golgi apparatus membrane. The enzyme catalyses Cleaves type-1 transmembrane domains using a catalytic dyad composed of serine and histidine that are contributed by different transmembrane domains.. Functionally, probable rhomboid-type serine protease that catalyzes intramembrane proteolysis. Unable to cleave the Drosophila protein Spitz. The chain is RHOMBOID-like protein 1 from Arabidopsis thaliana (Mouse-ear cress).